The chain runs to 799 residues: 1-phosphatidylinositol 4,5-bisphosphate phosphodiesterase delta-4 (799 aa).

In terms of domain architecture, PH spans 16 to 124 (LLMQEGMPMR…WMRGLHLLVD (109 aa)). The substrate binding stretch occupies residues 26 to 53 (KVRSKSWKKLRYFRLQNDGMTVWHARQA). EF-hand domains lie at 134–169 (RLDQWLSDWFQRGDKNQDGKMSFQEVQRLLHLMNVE), 170–205 (MDQEYAFSLFQAADTSQSGTLEGEEFVEFYKALTKR), and 206–237 (AEVQELFESFSADGQKLTLLEFSDFLREEQKE). The Ca(2+) site is built by D147, N149, D151, K153, E158, D183, S185, S187, T189, and E194. Positions 213-243 (ESFSADGQKLTLLEFSDFLREEQKERDCTSE) match the GBA motif. Positions 290–435 (QDMTQPLNHY…LRRKILVKGK (146 aa)) constitute a PI-PLC X-box domain. H305 is a catalytic residue. Positions 306, 335, and 337 each coordinate Ca(2+). The active site involves H350. E384 is a binding site for Ca(2+). Substrate contacts are provided by K433 and K435. The residue at position 460 (S460) is a Phosphoserine. Positions 530 to 646 (LSSLVIYLKS…GYVLKPDFLR (117 aa)) constitute a PI-PLC Y-box domain. Substrate-binding residues include S559 and R586. Residues 646–773 (RDNQSSFHPE…QGYRHIHLLS (128 aa)) enclose the C2 domain. The Ca(2+) site is built by I687, D689, N713, D742, Y743, and D744. The PDZ-binding signature appears at 768–771 (HIHL).

In terms of assembly, interacts with GRIP1. Interacts (via GBA motif) with guanine nucleotide-binding protein G(i) alpha subunit GNAI3 (inactive GDP-bound form); low-affinity interaction. Requires Ca(2+) as cofactor.

Its subcellular location is the membrane. It localises to the nucleus. The protein localises to the cytoplasm. The protein resides in the endoplasmic reticulum. It carries out the reaction a 1,2-diacyl-sn-glycero-3-phospho-(1D-myo-inositol-4,5-bisphosphate) + H2O = 1D-myo-inositol 1,4,5-trisphosphate + a 1,2-diacyl-sn-glycerol + H(+). The enzyme catalyses a 1,2-diacyl-sn-glycero-3-phospho-(1D-myo-inositol) + H2O = 1D-myo-inositol 1-phosphate + a 1,2-diacyl-sn-glycerol + H(+). Its function is as follows. Hydrolyzes the phosphatidylinositol 4,5-bisphosphate (PIP2) to generate 2 second messenger molecules diacylglycerol (DAG) and inositol 1,4,5-trisphosphate (IP3). DAG mediates the activation of protein kinase C (PKC), while IP3 releases Ca(2+) from intracellular stores. Required for acrosome reaction in sperm during fertilization, probably by acting as an important enzyme for intracellular Ca(2+) mobilization in the zona pellucida-induced acrosome reaction. May play a role in cell growth. Modulates the liver regeneration in cooperation with nuclear PKC. Overexpression up-regulates the Erk signaling pathway and proliferation. This is 1-phosphatidylinositol 4,5-bisphosphate phosphodiesterase delta-4 (PLCD4) from Macaca fascicularis (Crab-eating macaque).